A 168-amino-acid chain; its full sequence is Mitochondrial ATP-independent inner membrane protease subunit 1a (168 aa).

A mitochondrion-targeting transit peptide spans 1–47 (MRMTFLSYLKQWRGTAKEAFENVSIVAKFLCLLHVTDRYIISTTHVH). Catalysis depends on residues Ser50 and Lys94.

This sequence belongs to the peptidase S26 family. IMP1 subfamily. Heterodimer of 2 subunits, IMP1A/B and IMP12.

It localises to the mitochondrion inner membrane. Catalyzes the removal of transit peptides required for the targeting of proteins from the mitochondrial matrix, across the inner membrane, into the inter-membrane space. In Arabidopsis thaliana (Mouse-ear cress), this protein is Mitochondrial ATP-independent inner membrane protease subunit 1a.